A 151-amino-acid polypeptide reads, in one-letter code: UPF0756 membrane protein Aflv_0503 (151 aa).

4 consecutive transmembrane segments (helical) span residues F4–I24, L52–F72, W85–L105, and L115–I135.

This sequence belongs to the UPF0756 family.

It localises to the cell membrane. The chain is UPF0756 membrane protein Aflv_0503 from Anoxybacillus flavithermus (strain DSM 21510 / WK1).